Reading from the N-terminus, the 85-residue chain is Small ribosomal subunit protein bS20 (85 aa).

The segment at 1–25 (MANIKSAIKRAKLSEERRAHNASIK) is disordered.

The protein belongs to the bacterial ribosomal protein bS20 family.

In terms of biological role, binds directly to 16S ribosomal RNA. The polypeptide is Small ribosomal subunit protein bS20 (Bacillus anthracis (strain A0248)).